The primary structure comprises 373 residues: ATP phosphoribosyltransferase regulatory subunit (373 aa).

This sequence belongs to the class-II aminoacyl-tRNA synthetase family. HisZ subfamily. As to quaternary structure, heteromultimer composed of HisG and HisZ subunits.

It is found in the cytoplasm. It functions in the pathway amino-acid biosynthesis; L-histidine biosynthesis; L-histidine from 5-phospho-alpha-D-ribose 1-diphosphate: step 1/9. Required for the first step of histidine biosynthesis. May allow the feedback regulation of ATP phosphoribosyltransferase activity by histidine. The polypeptide is ATP phosphoribosyltransferase regulatory subunit (Rhizobium etli (strain ATCC 51251 / DSM 11541 / JCM 21823 / NBRC 15573 / CFN 42)).